A 140-amino-acid chain; its full sequence is Putative membrane protein ORF7 (140 aa).

Residues 44–60 (TCAVSFFALFMLIIWVL) form a helical membrane-spanning segment. Residues 66–118 (PEGSTTRGTDAHTQTEGSTTRGTDAHTQTEGSRDQGSMTPEADDLTRPPLGHG) are disordered. Residues 68–103 (GSTTRGTDAHTQTEGSTTRGTDAHTQTEGSRDQGSM) are compositionally biased toward polar residues.

The protein resides in the membrane. This Ictalurid herpesvirus 1 (strain Auburn) (IcHV-1) protein is Putative membrane protein ORF7 (ORF7).